Here is a 770-residue protein sequence, read N- to C-terminus: Protein PAT1 homolog 1 (770 aa).

The segment at 1-26 (MFRYESLEDCPLDEDEDAFQGLGEED) is disordered. The segment at 1-84 (MFRYESLEDC…EMDLLGDHEE (84 aa)) is region A; interaction with DDX6/RCK. The involved in nuclear foci localization stretch occupies residues 1 to 397 (MFRYESLEDC…HRSSHQDHLR (397 aa)). Residues 7 to 26 (LEDCPLDEDEDAFQGLGEED) are compositionally biased toward acidic residues. The region N; interaction with decapping machinery stretch occupies residues 85–388 (NLAERLSKMV…LNGAGDRGSH (304 aa)). Residues 86–95 (LAERLSKMVI) carry the Nuclear export signal motif. The residue at position 177 (serine 177) is a Phosphoserine. Residue threonine 178 is modified to Phosphothreonine. A phosphoserine mark is found at serine 179 and serine 184. The residue at position 194 (threonine 194) is a Phosphothreonine. An asymmetric dimethylarginine mark is found at arginine 217, arginine 223, and arginine 263. Residues 223–397 (RYPAPYGERM…HRSSHQDHLR (175 aa)) form an involved in RNA-binding region. The residue at position 278 (serine 278) is a Phosphoserine. An Asymmetric dimethylarginine modification is found at arginine 284. A compositionally biased stretch (low complexity) spans 314-323 (GFRAFFSAPP). Disordered stretches follow at residues 314 to 344 (GFRAFFSAPPSATPPPQQHPPGPGPHLQNLR) and 360 to 399 (QHRRLLHQRQQQNRSQHRNLNGAGDRGSHRSSHQDHLRKD). Over residues 324–337 (SATPPPQQHPPGPG) the composition is skewed to pro residues. Positions 367-380 (QRQQQNRSQHRNLN) are enriched in low complexity. Arginine 385 bears the Omega-N-methylarginine mark. Residues 385 to 399 (RGSHRSSHQDHLRKD) show a composition bias toward basic and acidic residues. A region H region spans residues 389–448 (RSSHQDHLRKDPYANLMLQREKDWVSKIQMMQLQSTDPYLDDFYYQNYFEKLEKLSAAEE). An involved in nuclear speckle localization region spans residues 398-770 (KDPYANLMLQ…TKLQLVQGIR (373 aa)). Residues 449 to 770 (IQGDGPKKER…TKLQLVQGIR (322 aa)) are region C.

Belongs to the PAT1 family. In terms of assembly, interacts (via region A) with DDX6/RCK. Interacts (via region H and region C) with LSM1 and LSM4. Interacts (via region N) with DCP1A, DCP2, EDC3, EDC4 and XRN1. Interacts with the CCR4-NOT complex. Interacts with the Lsm-containing SMN-Sm protein complex. Interacts with EIF4ENIF1/4E-T. As to expression, ubiquitous.

Its subcellular location is the cytoplasm. It is found in the P-body. It localises to the nucleus. The protein localises to the PML body. The protein resides in the nucleus speckle. Its function is as follows. RNA-binding protein involved in deadenylation-dependent decapping of mRNAs, leading to the degradation of mRNAs. Acts as a scaffold protein that connects deadenylation and decapping machinery. Required for cytoplasmic mRNA processing body (P-body) assembly. Functionally, (Microbial infection) In case of infection, required for translation and replication of hepatitis C virus (HCV). This is Protein PAT1 homolog 1 (PATL1) from Homo sapiens (Human).